The following is a 424-amino-acid chain: O-methyltransferase aunD (424 aa).

Position 275 (Asp-275) interacts with S-adenosyl-L-methionine. The Proton acceptor role is filled by His-326.

The protein belongs to the class I-like SAM-binding methyltransferase superfamily. Cation-independent O-methyltransferase family.

The protein operates within secondary metabolite biosynthesis. Functionally, O-methyltransferase; part of the gene cluster that mediates the biosynthesis of aurasperone B, a dimeric gamma-naphthopyrone. The first step in the biosynthesis of aurasperone B is the production of gamma-naphthopyrone precursor YWA1 by the non-reducing polyketide synthase albA, via condensation of one acetyl-CoA starter unit with 6 malonyl-CoA units. YWA1 is then methylated by aunE at position C-6 to yield foncesin which is further methylated at position C-8 by aunD to produce fonsecin B. A key enzyme in the biosynthetic pathway is the cytochrome P450 monooxygenase aunB which catalyzes the oxidative dimerization of fonsecin B to aurasperone B. AunB also catalyzes the oxidative dimerization of rubrofusarin B into aurasperone A. The sequence is that of O-methyltransferase aunD from Aspergillus niger (strain ATCC MYA-4892 / CBS 513.88 / FGSC A1513).